Here is a 149-residue protein sequence, read N- to C-terminus: MAKLTILIALVAALVLVVHTSAFRSSEQSCKRQLQQVNLRHCENHIDQRIQQQQEEEEDRARKLRGIKHVILRHKSSQESEELDQCCEQLNELNSQRCQCRALQQIYESQSEQCEGRQQEQQLEGELEKLPRICGFGPLRRCNINPDEE.

An N-terminal signal peptide occupies residues 1 to 22 (MAKLTILIALVAALVLVVHTSA). 4 disulfide bridges follow: Cys-30/Cys-98, Cys-42/Cys-86, Cys-87/Cys-134, and Cys-100/Cys-142.

The protein belongs to the 2S seed storage albumins family. In terms of assembly, heterodimer of a small chain and a large chain; disulfide-linked.

It localises to the endoplasmic reticulum. This is Conglutin delta 3 from Lupinus angustifolius (Narrow-leaved blue lupine).